Consider the following 105-residue polypeptide: Small ribosomal subunit protein uS10 (105 aa).

The protein belongs to the universal ribosomal protein uS10 family. In terms of assembly, part of the 30S ribosomal subunit.

Its function is as follows. Involved in the binding of tRNA to the ribosomes. The chain is Small ribosomal subunit protein uS10 from Arthrospira platensis (Spirulina platensis).